The following is an 810-amino-acid chain: DNA gyrase subunit A (810 aa).

One can recognise a Topo IIA-type catalytic domain in the interval 36–502 (LPDVRDGLKP…EVLKTSMSDL (467 aa)). Residue Tyr124 is the O-(5'-phospho-DNA)-tyrosine intermediate of the active site. Positions 529 to 535 (QGIGGKG) match the GyrA-box motif.

Belongs to the type II topoisomerase GyrA/ParC subunit family. As to quaternary structure, heterotetramer, composed of two GyrA and two GyrB chains. In the heterotetramer, GyrA contains the active site tyrosine that forms a transient covalent intermediate with DNA, while GyrB binds cofactors and catalyzes ATP hydrolysis.

Its subcellular location is the cytoplasm. It catalyses the reaction ATP-dependent breakage, passage and rejoining of double-stranded DNA.. A type II topoisomerase that negatively supercoils closed circular double-stranded (ds) DNA in an ATP-dependent manner to modulate DNA topology and maintain chromosomes in an underwound state. Negative supercoiling favors strand separation, and DNA replication, transcription, recombination and repair, all of which involve strand separation. Also able to catalyze the interconversion of other topological isomers of dsDNA rings, including catenanes and knotted rings. Type II topoisomerases break and join 2 DNA strands simultaneously in an ATP-dependent manner. The protein is DNA gyrase subunit A of Borrelia hermsii (strain HS1 / DAH).